Here is a 239-residue protein sequence, read N- to C-terminus: LexA repressor (239 aa).

Residues 1-40 (MTEAATGPEGADPSRAARSLPGRPPGIRADSSGLTDRQRR) are disordered. Positions 58–78 (MREIGQAVGLSSTSSVAHQLM) form a DNA-binding region, H-T-H motif. The segment covering 89 to 100 (DPHRPRAYEVRG) has biased composition (basic and acidic residues). Positions 89 to 116 (DPHRPRAYEVRGSDQPSAQPADTSGKPA) are disordered. Catalysis depends on for autocatalytic cleavage activity residues S163 and K200.

It belongs to the peptidase S24 family. In terms of assembly, homodimer.

It carries out the reaction Hydrolysis of Ala-|-Gly bond in repressor LexA.. Its function is as follows. Represses a number of genes involved in the response to DNA damage (SOS response), including recA and lexA. In the presence of single-stranded DNA, RecA interacts with LexA causing an autocatalytic cleavage which disrupts the DNA-binding part of LexA, leading to derepression of the SOS regulon and eventually DNA repair. In Streptomyces clavuligerus, this protein is LexA repressor.